The following is a 122-amino-acid chain: MIQPQTYLNVADNSGARKLMCIRVLGAGNSRYGFIGDKIIAVVKDATPNMAVKKSDVVEAVIVRTRHHIRRDSGMTIRFDDNAAVIINKDGNPRGTRVFGPVARELRDKNFTKIVSLAPEVL.

Belongs to the universal ribosomal protein uL14 family. Part of the 50S ribosomal subunit. Forms a cluster with proteins L3 and L19. In the 70S ribosome, L14 and L19 interact and together make contacts with the 16S rRNA in bridges B5 and B8.

Binds to 23S rRNA. Forms part of two intersubunit bridges in the 70S ribosome. The polypeptide is Large ribosomal subunit protein uL14 (Trichormus variabilis (strain ATCC 29413 / PCC 7937) (Anabaena variabilis)).